The following is a 273-amino-acid chain: Ribosomal RNA small subunit methyltransferase A (273 aa).

The S-adenosyl-L-methionine site is built by Asn18, Leu20, Gly45, Glu66, Asp91, and Asn113.

This sequence belongs to the class I-like SAM-binding methyltransferase superfamily. rRNA adenine N(6)-methyltransferase family. RsmA subfamily.

Its subcellular location is the cytoplasm. The catalysed reaction is adenosine(1518)/adenosine(1519) in 16S rRNA + 4 S-adenosyl-L-methionine = N(6)-dimethyladenosine(1518)/N(6)-dimethyladenosine(1519) in 16S rRNA + 4 S-adenosyl-L-homocysteine + 4 H(+). Functionally, specifically dimethylates two adjacent adenosines (A1518 and A1519) in the loop of a conserved hairpin near the 3'-end of 16S rRNA in the 30S particle. May play a critical role in biogenesis of 30S subunits. The protein is Ribosomal RNA small subunit methyltransferase A of Escherichia fergusonii (strain ATCC 35469 / DSM 13698 / CCUG 18766 / IAM 14443 / JCM 21226 / LMG 7866 / NBRC 102419 / NCTC 12128 / CDC 0568-73).